We begin with the raw amino-acid sequence, 227 residues long: Izumo sperm-egg fusion protein 4 (227 aa).

A signal peptide spans 1-24; it reads MFGQGRLGQAMALLLFLGMTAALA. Residues asparagine 153 and asparagine 214 are each glycosylated (N-linked (GlcNAc...) asparagine).

This sequence belongs to the Izumo family.

Its subcellular location is the secreted. This is Izumo sperm-egg fusion protein 4 (Izumo4) from Mus musculus (Mouse).